Reading from the N-terminus, the 103-residue chain is Large ribosomal subunit protein bL21 (103 aa).

It belongs to the bacterial ribosomal protein bL21 family. In terms of assembly, part of the 50S ribosomal subunit. Contacts protein L20.

Its function is as follows. This protein binds to 23S rRNA in the presence of protein L20. In Erwinia tasmaniensis (strain DSM 17950 / CFBP 7177 / CIP 109463 / NCPPB 4357 / Et1/99), this protein is Large ribosomal subunit protein bL21.